A 520-amino-acid polypeptide reads, in one-letter code: GMP synthase [glutamine-hydrolyzing] (520 aa).

Residues 9–202 (KILILDFGSQ…VRQICGCTGQ (194 aa)) form the Glutamine amidotransferase type-1 domain. Cysteine 86 (nucleophile) is an active-site residue. Catalysis depends on residues histidine 176 and glutamate 178. The GMPS ATP-PPase domain occupies 203–395 (WTPGQIIEDA…LGLPHPMVYR (193 aa)). 230-236 (SGGVDSS) provides a ligand contact to ATP.

Homodimer.

It carries out the reaction XMP + L-glutamine + ATP + H2O = GMP + L-glutamate + AMP + diphosphate + 2 H(+). It participates in purine metabolism; GMP biosynthesis; GMP from XMP (L-Gln route): step 1/1. Functionally, catalyzes the synthesis of GMP from XMP. In Syntrophotalea carbinolica (strain DSM 2380 / NBRC 103641 / GraBd1) (Pelobacter carbinolicus), this protein is GMP synthase [glutamine-hydrolyzing].